Here is a 188-residue protein sequence, read N- to C-terminus: Apolipoprotein M (188 aa).

The segment at residues 1 to 22 (MFHQIWAALLYFYGIILNSIYQ) is a signal peptide (not cleaved). Intrachain disulfides connect C23–C167, C95–C183, and C128–C157. The N-linked (GlcNAc...) asparagine glycan is linked to N135. Positions 136 and 143 each coordinate tetradecanoate.

This sequence belongs to the calycin superfamily. Lipocalin family. Highly divergent. In terms of assembly, interacts with LRP2; LRP2 mediates APOM renal uptake and subsequent lysosomal degradation.

It localises to the secreted. In terms of biological role, probably involved in lipid transport. Can bind sphingosine-1-phosphate, myristic acid, palmitic acid and stearic acid, retinol, all-trans-retinoic acid and 9-cis-retinoic acid. The protein is Apolipoprotein M (APOM) of Pongo abelii (Sumatran orangutan).